A 324-amino-acid chain; its full sequence is Dermonecrotic toxin Hl-PLD1 (324 aa).

Positions 1–35 (MAHCYYNSKRGCNRVMKTVALVVLISTVMVEESRG) are cleaved as a signal peptide. His50 is an active-site residue. 2 residues coordinate Mg(2+): Glu70 and Asp72. The Nucleophile role is filled by His86. 2 disulfides stabilise this stretch: Cys90-Cys96 and Cys92-Cys236. Asp130 serves as a coordination point for Mg(2+).

The protein belongs to the arthropod phospholipase D family. Class II subfamily. Mg(2+) is required as a cofactor. Expressed by the venom gland.

The protein localises to the secreted. The enzyme catalyses an N-(acyl)-sphingosylphosphocholine = an N-(acyl)-sphingosyl-1,3-cyclic phosphate + choline. It catalyses the reaction an N-(acyl)-sphingosylphosphoethanolamine = an N-(acyl)-sphingosyl-1,3-cyclic phosphate + ethanolamine. The catalysed reaction is a 1-acyl-sn-glycero-3-phosphocholine = a 1-acyl-sn-glycero-2,3-cyclic phosphate + choline. It carries out the reaction a 1-acyl-sn-glycero-3-phosphoethanolamine = a 1-acyl-sn-glycero-2,3-cyclic phosphate + ethanolamine. Functionally, dermonecrotic toxins cleave the phosphodiester linkage between the phosphate and headgroup of certain phospholipids (sphingolipid and lysolipid substrates), forming an alcohol (often choline) and a cyclic phosphate. This toxin acts on sphingomyelin (SM) with a high activity. It may also act on ceramide phosphoethanolamine (CPE), lysophosphatidylcholine (LPC) and lysophosphatidylethanolamine (LPE), but not on lysophosphatidylserine (LPS), and lysophosphatidylglycerol (LPG). It acts by transphosphatidylation, releasing exclusively cyclic phosphate products as second products. In vivo, shows dermonecrotic activity when intradermally injected into rabbit skin and is lethal to mice. Induces increased vascular permeability, edema, inflammatory response, and platelet aggregation. Does not show hemolytic activity (at up to 50 ug). The polypeptide is Dermonecrotic toxin Hl-PLD1 (Hemiscorpius lepturus (Scorpion)).